We begin with the raw amino-acid sequence, 151 residues long: Large ribosomal subunit protein bL9 (151 aa).

The protein belongs to the bacterial ribosomal protein bL9 family.

In terms of biological role, binds to the 23S rRNA. In Rhodococcus erythropolis (strain PR4 / NBRC 100887), this protein is Large ribosomal subunit protein bL9.